The following is a 227-amino-acid chain: Lectin (227 aa).

The N-terminal stretch at Met-1 to Ala-28 is a signal peptide. A Pyrrolidone carboxylic acid modification is found at Gln-29. Chitin-binding type-1 domains lie at Gln-29 to Ser-70, Ser-71 to Ala-113, Asp-114 to Pro-156, and Glu-157 to Lys-199. 16 disulfide bridges follow: Cys-31–Cys-46, Cys-40–Cys-52, Cys-45–Cys-59, Cys-63–Cys-68, Cys-74–Cys-89, Cys-83–Cys-95, Cys-88–Cys-102, Cys-106–Cys-111, Cys-117–Cys-132, Cys-126–Cys-138, Cys-131–Cys-145, Cys-149–Cys-154, Cys-160–Cys-175, Cys-169–Cys-181, Cys-174–Cys-188, and Cys-192–Cys-197. Met-38–Cys-40 is a binding site for substrate. Residue Ser-90–Tyr-101 participates in substrate binding. Ser-142–Glu-143 is a binding site for substrate. A propeptide spanning residues Asp-202–Val-227 is cleaved from the precursor. N-linked (GlcNAc...) asparagine glycosylation occurs at Asn-211.

In terms of biological role, N-acetyl-D-glucosamine binding lectin. This is Lectin from Oryza sativa subsp. indica (Rice).